A 140-amino-acid chain; its full sequence is Putative nickel-responsive regulator 3 (140 aa).

The Ni(2+) site is built by H81, H92, H94, and C100.

Belongs to the transcriptional regulatory CopG/NikR family. The cofactor is Ni(2+).

Functionally, transcriptional regulator. The sequence is that of Putative nickel-responsive regulator 3 from Methanosarcina mazei (strain ATCC BAA-159 / DSM 3647 / Goe1 / Go1 / JCM 11833 / OCM 88) (Methanosarcina frisia).